The primary structure comprises 400 residues: DNA primase small subunit PriS (400 aa).

Catalysis depends on residues aspartate 98, aspartate 100, and aspartate 306.

The protein belongs to the eukaryotic-type primase small subunit family. As to quaternary structure, heterodimer of a small subunit (PriS) and a large subunit (PriL). Mg(2+) serves as cofactor. It depends on Mn(2+) as a cofactor.

In terms of biological role, catalytic subunit of DNA primase, an RNA polymerase that catalyzes the synthesis of short RNA molecules used as primers for DNA polymerase during DNA replication. The small subunit contains the primase catalytic core and has DNA synthesis activity on its own. Binding to the large subunit stabilizes and modulates the activity, increasing the rate of DNA synthesis while decreasing the length of the DNA fragments, and conferring RNA synthesis capability. The DNA polymerase activity may enable DNA primase to also catalyze primer extension after primer synthesis. May also play a role in DNA repair. This Methanocella arvoryzae (strain DSM 22066 / NBRC 105507 / MRE50) protein is DNA primase small subunit PriS.